The primary structure comprises 470 residues: Putative multidrug resistance protein MdtD (470 aa).

The Periplasmic segment spans residues 1–11; it reads MTELPDNTRWQ. Residues 12-32 traverse the membrane as a helical segment; the sequence is LWIVAFGFFMQSLDTTIVNTA. Topologically, residues 33 to 48 are cytoplasmic; sequence LPSMAKSLGESPLHMH. A helical transmembrane segment spans residues 49–69; sequence MVVVSYVLTVAVMLPASGWLA. Residues 70–76 lie on the Periplasmic side of the membrane; that stretch reads DKIGVRN. A helical membrane pass occupies residues 77-97; sequence IFFAAIVLFTLGSLFCALSGT. At 98–101 the chain is on the cytoplasmic side; that stretch reads LNQL. A helical transmembrane segment spans residues 102 to 124; the sequence is VLARVLQGVGGAMMVPVGRLTVM. At 125–137 the chain is on the periplasmic side; the sequence is KIVPRAQYMAAMT. Residues 138–158 traverse the membrane as a helical segment; sequence FVTLPGQIGPLLGPALGGVLV. Over 159–164 the chain is Cytoplasmic; it reads EYASWH. The chain crosses the membrane as a helical span at residues 165 to 185; it reads WIFLINIPVGIVGAMATFMLM. At 186–196 the chain is on the periplasmic side; it reads PNYTIETRRFD. A helical transmembrane segment spans residues 197–217; sequence LPGFLLLAIGMAVLTLALDGS. The Cytoplasmic segment spans residues 218-224; the sequence is KSMGISP. Residues 225-245 traverse the membrane as a helical segment; that stretch reads WTLAGLAAGGAAAILLYLFHA. Residues 246-262 are Periplasmic-facing; that stretch reads KKNSGALFSLRLFRTPT. A helical membrane pass occupies residues 263–283; the sequence is FSLGLLGSFAGRIGSGMLPFM. The Cytoplasmic segment spans residues 284–285; that stretch reads TP. The chain crosses the membrane as a helical span at residues 286-306; the sequence is VFLQIGLGFSPFHAGLMMIPM. Topologically, residues 307 to 341 are periplasmic; it reads VLGSMGMKRIVVQIVNRFGYRRVLVATTLGLALVS. A helical transmembrane segment spans residues 342 to 362; the sequence is LLFMSVALLGWYYLLPLVLLL. Residues 363–395 lie on the Cytoplasmic side of the membrane; the sequence is QGMVNSARFSSMNTLTLKDLPDTLASSGNSLLS. The chain crosses the membrane as a helical span at residues 396 to 416; that stretch reads MIMQLSMSIGVTIAGMLLGMF. The Periplasmic portion of the chain corresponds to 417 to 430; the sequence is GQQHIGIDSSATHH. Residues 431-451 form a helical membrane-spanning segment; that stretch reads VFMYTWLCMAVIIALPAIIFA. Residues 452–470 lie on the Cytoplasmic side of the membrane; that stretch reads RVPNDTQQNMVISRRKRSL.

Belongs to the major facilitator superfamily. TCR/Tet family.

The protein localises to the cell inner membrane. This chain is Putative multidrug resistance protein MdtD, found in Salmonella agona (strain SL483).